A 747-amino-acid chain; its full sequence is Cysteine--tRNA ligase, cytoplasmic (747 aa).

Residues 1–25 are disordered; that stretch reads MTDSWERGKGRRTQPPWSAPNTQAQ. Positions 15–25 are enriched in polar residues; it reads PPWSAPNTQAQ. C54 serves as a coordination point for Zn(2+). G55 contributes to the L-cysteine binding site. The short motif at 56-66 is the 'HIGH' region element; it reads PTVYDASHMGH. T95 contributes to the L-cysteine binding site. Residues 100–103 carry the 'KIIK' region motif; that stretch reads KIIK. Residues C347, H372, and E376 each contribute to the Zn(2+) site. Residue H372 participates in L-cysteine binding. A 'KMSKS' region motif is present at residues 405 to 409; the sequence is KMSKS. Position 408 (K408) interacts with ATP. Residues 651–683 show a composition bias toward basic and acidic residues; the sequence is EEKRKAEEEKQRKKEEAARKKQQQEAAKLEKMK. Positions 651–722 are disordered; the sequence is EEKRKAEEEK…KELSKGQSKK (72 aa).

It belongs to the class-I aminoacyl-tRNA synthetase family. Homodimer. The cofactor is Zn(2+).

It localises to the cytoplasm. It catalyses the reaction tRNA(Cys) + L-cysteine + ATP = L-cysteinyl-tRNA(Cys) + AMP + diphosphate. Its function is as follows. Catalyzes the ATP-dependent ligation of cysteine to tRNA(Cys). This is Cysteine--tRNA ligase, cytoplasmic (cars1) from Xenopus tropicalis (Western clawed frog).